A 360-amino-acid polypeptide reads, in one-letter code: MTTTLQRRESANLWERFCNWVTSTDNRLYVGWFGVIMIPTLLAATICFVIAFIAAPPVDIDGIREPVSGSLLYGNNIITGAVVPSSNAIGLHFYPIWEAASLDEWLYNGGPYQLIIFHFLLGASCYMGRQWELSYRLGMRPWICVAYSAPLASAFAVFLIYPIGQGSFSDGMPLGISGTFNFMIVFQAEHNILMHPFHQLGVAGVFGGALFCAMHGSLVTSSLIRETTETESANYGYKFGQEEETYNIVAAHGYFGRLIFQYASFNNSRSLHFFLAAWRVVGVWFAALGISTMAFNLNGFNFNHSVIDAKGNVINTWADIINRANLGMEVMHERNAHNFPLDLASAESAPVAMIAPSING.

At 1–28 the chain is on the cytoplasmic side; the sequence is MTTTLQRRESANLWERFCNWVTSTDNRL. A helical membrane pass occupies residues 29-46; sequence YVGWFGVIMIPTLLAATI. At 47 to 117 the chain is on the lumenal side; it reads CFVIAFIAAP…NGGPYQLIIF (71 aa). H118 is a binding site for chlorophyll a. The chain crosses the membrane as a helical span at residues 118-133; it reads HFLLGASCYMGRQWEL. Y126 and Q130 together coordinate pheophytin a. At 134–141 the chain is on the cytoplasmic side; it reads SYRLGMRP. Residues 142–156 form a helical membrane-spanning segment; the sequence is WICVAYSAPLASAFA. Residue Y147 coordinates pheophytin a. At 157–196 the chain is on the lumenal side; that stretch reads VFLIYPIGQGSFSDGMPLGISGTFNFMIVFQAEHNILMHP. [CaMn4O5] cluster-binding residues include D170 and E189. Residues 197-218 traverse the membrane as a helical segment; sequence FHQLGVAGVFGGALFCAMHGSL. Residue H198 participates in chlorophyll a binding. Pheophytin a is bound at residue M214. Residues H215 and 264–265 contribute to the a quinone site; that span reads SF. H215 contributes to the Fe cation binding site. Residues 219–273 lie on the Cytoplasmic side of the membrane; it reads VTSSLIRETTETESANYGYKFGQEEETYNIVAAHGYFGRLIFQYASFNNSRSLHF. Position 272 (H272) interacts with Fe cation. A helical membrane pass occupies residues 274–288; it reads FLAAWRVVGVWFAAL. Over 289-360 the chain is Lumenal; that stretch reads GISTMAFNLN…VAMIAPSING (72 aa). Residues H332, E333, D342, and A344 each contribute to the [CaMn4O5] cluster site. Positions 345-360 are excised as a propeptide; sequence SAESAPVAMIAPSING.

It belongs to the reaction center PufL/M/PsbA/D family. PSII is composed of 1 copy each of membrane proteins PsbA, PsbB, PsbC, PsbD, PsbE, PsbF, PsbH, PsbI, PsbJ, PsbK, PsbL, PsbM, PsbT, PsbX, PsbY, PsbZ, Psb30/Ycf12, peripheral proteins PsbO, CyanoQ (PsbQ), PsbU, PsbV and a large number of cofactors. It forms dimeric complexes. The D1/D2 heterodimer binds P680, chlorophylls that are the primary electron donor of PSII, and subsequent electron acceptors. It shares a non-heme iron and each subunit binds pheophytin, quinone, additional chlorophylls, carotenoids and lipids. D1 provides most of the ligands for the Mn4-Ca-O5 cluster of the oxygen-evolving complex (OEC). There is also a Cl(-1) ion associated with D1 and D2, which is required for oxygen evolution. The PSII complex binds additional chlorophylls, carotenoids and specific lipids. serves as cofactor. In terms of processing, C-terminally processed by CtpA; processing is essential to allow assembly of the oxygen-evolving complex and thus photosynthetic growth. Tyr-161 forms a radical intermediate that is referred to as redox-active TyrZ, YZ or Y-Z.

The protein localises to the cellular thylakoid membrane. It carries out the reaction 2 a plastoquinone + 4 hnu + 2 H2O = 2 a plastoquinol + O2. Its function is as follows. Photosystem II (PSII) is a light-driven water:plastoquinone oxidoreductase that uses light energy to abstract electrons from H(2)O, generating O(2) and a proton gradient subsequently used for ATP formation. It consists of a core antenna complex that captures photons, and an electron transfer chain that converts photonic excitation into a charge separation. The D1/D2 (PsbA/PsbD) reaction center heterodimer binds P680, the primary electron donor of PSII as well as several subsequent electron acceptors. This is Photosystem II protein D1 from Thermostichus vulcanus (Synechococcus vulcanus).